The sequence spans 469 residues: ATP-dependent protease ATPase subunit HslU (469 aa).

ATP is bound by residues Ile-24, 66-71, Asp-282, Glu-347, and Arg-419; that span reads GVGKTE.

It belongs to the ClpX chaperone family. HslU subfamily. A double ring-shaped homohexamer of HslV is capped on each side by a ring-shaped HslU homohexamer. The assembly of the HslU/HslV complex is dependent on binding of ATP.

Its subcellular location is the cytoplasm. In terms of biological role, ATPase subunit of a proteasome-like degradation complex; this subunit has chaperone activity. The binding of ATP and its subsequent hydrolysis by HslU are essential for unfolding of protein substrates subsequently hydrolyzed by HslV. HslU recognizes the N-terminal part of its protein substrates and unfolds these before they are guided to HslV for hydrolysis. This chain is ATP-dependent protease ATPase subunit HslU, found in Listeria monocytogenes serotype 4a (strain HCC23).